The sequence spans 106 residues: Ribonuclease P protein component 4 (106 aa).

The Zn(2+) site is built by cysteine 63, cysteine 66, cysteine 89, and cysteine 92.

The protein belongs to the eukaryotic/archaeal RNase P protein component 4 family. In terms of assembly, consists of a catalytic RNA component and at least 4-5 protein subunits. Zn(2+) is required as a cofactor.

The protein localises to the cytoplasm. The catalysed reaction is Endonucleolytic cleavage of RNA, removing 5'-extranucleotides from tRNA precursor.. Part of ribonuclease P, a protein complex that generates mature tRNA molecules by cleaving their 5'-ends. The polypeptide is Ribonuclease P protein component 4 (Methanosphaerula palustris (strain ATCC BAA-1556 / DSM 19958 / E1-9c)).